Reading from the N-terminus, the 271-residue chain is Type II restriction enzyme ScrFI (271 aa).

The enzyme catalyses Endonucleolytic cleavage of DNA to give specific double-stranded fragments with terminal 5'-phosphates.. Functionally, a P subtype restriction enzyme that recognizes the double-stranded sequence 5'-CCNGG-3' and cleaves after C-2. The protein is Type II restriction enzyme ScrFI of Lactococcus lactis subsp. cremoris (Streptococcus cremoris).